Consider the following 350-residue polypeptide: Biotin synthase (350 aa).

The region spanning 41 to 268 (NEVQISRLLS…KSRVRLSAGR (228 aa)) is the Radical SAM core domain. The [4Fe-4S] cluster site is built by C56, C60, and C63. Residues C100, C131, C191, and R263 each coordinate [2Fe-2S] cluster.

It belongs to the radical SAM superfamily. Biotin synthase family. In terms of assembly, homodimer. [4Fe-4S] cluster is required as a cofactor. Requires [2Fe-2S] cluster as cofactor.

It carries out the reaction (4R,5S)-dethiobiotin + (sulfur carrier)-SH + 2 reduced [2Fe-2S]-[ferredoxin] + 2 S-adenosyl-L-methionine = (sulfur carrier)-H + biotin + 2 5'-deoxyadenosine + 2 L-methionine + 2 oxidized [2Fe-2S]-[ferredoxin]. It participates in cofactor biosynthesis; biotin biosynthesis; biotin from 7,8-diaminononanoate: step 2/2. Catalyzes the conversion of dethiobiotin (DTB) to biotin by the insertion of a sulfur atom into dethiobiotin via a radical-based mechanism. This is Biotin synthase from Shewanella sp. (strain ANA-3).